A 213-amino-acid chain; its full sequence is ATP synthase peripheral stalk subunit OSCP, mitochondrial (213 aa).

The transit peptide at 1–23 (MAAPATSVLSRQVRSFSTSVVRP) directs the protein to the mitochondrion. Residues 5-23 (ATSVLSRQVRSFSTSVVRP) carry the SIFI-degron motif. N6-acetyllysine is present on residues Lys-60, Lys-70, and Lys-73. Position 90 is an N6-succinyllysine (Lys-90). Lys-100 and Lys-158 each carry N6-acetyllysine; alternate. An N6-succinyllysine; alternate mark is found at Lys-100 and Lys-158. An N6-acetyllysine mark is found at Lys-176 and Lys-192. Lys-199 carries the N6-succinyllysine modification.

The protein belongs to the ATPase delta chain family. Component of the ATP synthase complex composed at least of ATP5F1A/subunit alpha, ATP5F1B/subunit beta, ATP5MC1/subunit c (homooctomer), MT-ATP6/subunit a, MT-ATP8/subunit 8, ATP5ME/subunit e, ATP5MF/subunit f, ATP5MG/subunit g, ATP5MK/subunit k, ATP5MJ/subunit j, ATP5F1C/subunit gamma, ATP5F1D/subunit delta, ATP5F1E/subunit epsilon, ATP5PF/subunit F6, ATP5PB/subunit b, ATP5PD/subunit d, ATP5PO/subunit OSCP. ATP synthase complex consists of a soluble F(1) head domain (subunits alpha(3) and beta(3)) - the catalytic core - and a membrane F(0) domain - the membrane proton channel (subunits c, a, 8, e, f, g, k and j). These two domains are linked by a central stalk (subunits gamma, delta, and epsilon) rotating inside the F1 region and a stationary peripheral stalk (subunits F6, b, d, and OSCP). Post-translationally, in response to mitochondrial stress, the precursor protein is ubiquitinated by the SIFI complex in the cytoplasm before mitochondrial import, leading to its degradation. Within the SIFI complex, UBR4 initiates ubiquitin chain that are further elongated or branched by KCMF1. In terms of tissue distribution, expressed by the principal cells of the epididymis. Detected in flagella of epididymal sperm (at protein level).

It is found in the mitochondrion. It localises to the mitochondrion inner membrane. Functionally, subunit OSCP, of the mitochondrial membrane ATP synthase complex (F(1)F(0) ATP synthase or Complex V) that produces ATP from ADP in the presence of a proton gradient across the membrane which is generated by electron transport complexes of the respiratory chain. ATP synthase complex consist of a soluble F(1) head domain - the catalytic core - and a membrane F(1) domain - the membrane proton channel. These two domains are linked by a central stalk rotating inside the F(1) region and a stationary peripheral stalk. During catalysis, ATP synthesis in the catalytic domain of F(1) is coupled via a rotary mechanism of the central stalk subunits to proton translocation. In vivo, can only synthesize ATP although its ATP hydrolase activity can be activated artificially in vitro. Part of the complex F(0) domain. Part of the complex F(0) domain and the peripheric stalk, which acts as a stator to hold the catalytic alpha(3)beta(3) subcomplex and subunit a/ATP6 static relative to the rotary elements. This Rattus norvegicus (Rat) protein is ATP synthase peripheral stalk subunit OSCP, mitochondrial.